A 362-amino-acid chain; its full sequence is F-box protein At1g54550 (362 aa).

One can recognise an F-box domain in the interval 1-47 (MATVTDLPDDLVREIFSRVPLTSLRAVRSTCKKWNAISKYDILGKKA).

This is F-box protein At1g54550 from Arabidopsis thaliana (Mouse-ear cress).